The sequence spans 362 residues: H-2 class I histocompatibility antigen, L-D alpha chain (362 aa).

The signal sequence occupies residues 1-24 (MGAMAPRTLLLLLAAALAPTQTRA). The segment at 25–114 (GPHSMRYFET…LLGYYNQSAG (90 aa)) is alpha-1. The Extracellular segment spans residues 25 to 309 (GPHSMRYFET…PPPSTDSYMV (285 aa)). An N-linked (GlcNAc...) asparagine glycan is attached at Asn110. Residues 115 to 206 (GTHTLQWMYG…KNGNATLLRT (92 aa)) are alpha-2. Cys125 and Cys188 are disulfide-bonded. 2 N-linked (GlcNAc...) asparagine glycosylation sites follow: Asn200 and Asn280. Positions 207-298 (DSPKAHVTHH…GLPEPLTLRW (92 aa)) are alpha-3. The Ig-like C1-type domain occupies 209–297 (PKAHVTHHPR…EGLPEPLTLR (89 aa)). Cysteines 227 and 283 form a disulfide. Residues 299–309 (EPPPSTDSYMV) are connecting peptide. A helical membrane pass occupies residues 310-331 (IVAVLGVLGAMAIIGAVVAFVM). Topologically, residues 332 to 362 (KRRRNTGGKGGDYALAPGSQSSEMSLRDCKA) are cytoplasmic. Positions 340 to 362 (KGGDYALAPGSQSSEMSLRDCKA) are disordered. Phosphoserine is present on residues Ser353 and Ser356.

The protein belongs to the MHC class I family. Heterodimer of an alpha chain and a beta chain (beta-2-microglobulin).

Its subcellular location is the membrane. Functionally, involved in the presentation of foreign antigens to the immune system. This Mus musculus (Mouse) protein is H-2 class I histocompatibility antigen, L-D alpha chain (H2-L).